The following is a 998-amino-acid chain: Protein Smaug (998 aa).

Over residues Met-1–Thr-37 the composition is skewed to polar residues. Disordered stretches follow at residues Met-1–Ser-45, Thr-50–Pro-69, and Leu-329–Ser-370. Over residues Leu-329–Ser-338 the composition is skewed to low complexity. Ser-564 and Ser-575 each carry phosphoserine. The interval Glu-583–Met-763 is interaction with cup. Residues Gly-600 to Lys-654 form the SAM domain. 2 disordered regions span residues His-773–Met-892 and Asn-943–Lys-977. 2 stretches are compositionally biased toward polar residues: residues Lys-801–Leu-822 and His-854–Pro-864. Ser-971 is modified (phosphoserine).

It belongs to the SMAUG family. Interacts with oskar (osk). Binds to the 3'-UTR of nos. Interacts with cup, which in turn recruits eIF4-E, leading to an indirect interaction between smg and eIF4-E that prevents mRNA translation.

It is found in the cytoplasm. Functionally, translation regulator that binds to the 3'-UTR of specific mRNAs such as nanos (nos) and prevent their translation. Prevents translation of unlocalized nos in the bulk cytoplasm via the recruitment of cup. This Drosophila sechellia (Fruit fly) protein is Protein Smaug.